Consider the following 3658-residue polypeptide: E3 ubiquitin-protein ligase UPL2 (3658 aa).

The span at 884 to 893 shows a compositional bias: basic and acidic residues; it reads DEKKSVDRAS. Residues 884-914 are disordered; that stretch reads DEKKSVDRASDNSVSASSSTAERESDEDSSN. Residues 894–903 are compositionally biased toward low complexity; the sequence is DNSVSASSST. Positions 1271–1312 constitute a UBA domain; it reads QPDEAIVGMIVEMGFSRSRAEDALRRVGTNSVEMAMDWLFTN. Residues 1318 to 1337 enclose the UIM domain; that stretch reads QEDDELAQALALSLGNSSET. Disordered stretches follow at residues 1331 to 1360, 1702 to 1733, 2004 to 2038, 2052 to 2072, 2113 to 2204, 2293 to 2313, 2417 to 2487, 2503 to 2591, and 2958 to 2987; these read LGNS…KEPP, VSGS…SKSH, AEQL…VDEL, VDNG…RGSS, HVED…DDMV, PLFS…SAGS, ERET…EGGG, SAQG…PEVN, and SPSS…AESE. Basic and acidic residues predominate over residues 1338–1347; the sequence is PKLEDTEKPV. Residues 2007-2027 show a composition bias toward basic and acidic residues; the sequence is LKSEVPNEQKNTDSDERHDSH. Residues 2028–2038 are compositionally biased toward polar residues; the sequence is GTSTSTEVDEL. 2 stretches are compositionally biased toward acidic residues: residues 2117-2144 and 2156-2204; these read RADD…DSVE and DVED…DDMV. Positions 2297–2313 are enriched in polar residues; it reads RPSQTGNTASVSASAGS. The segment covering 2422–2431 has biased composition (low complexity); that stretch reads TTEVQEQQQP. A compositionally biased stretch (polar residues) spans 2503 to 2518; sequence SAQGQSDTSGIQNVSV. Residue Ser2582 is modified to Phosphoserine. Residues 3317–3658 enclose the HECT domain; the sequence is SPQDLKGRLN…HEANEGFGFA (342 aa). The active-site Glycyl thioester intermediate is Cys3625.

It belongs to the UPL family. TOM1/PTR1 subfamily. As to expression, widely expressed. Expressed in root, stem, cauline and rosette leaf, seedling and flower (at protein level).

The catalysed reaction is S-ubiquitinyl-[E2 ubiquitin-conjugating enzyme]-L-cysteine + [acceptor protein]-L-lysine = [E2 ubiquitin-conjugating enzyme]-L-cysteine + N(6)-ubiquitinyl-[acceptor protein]-L-lysine.. The protein operates within protein modification; protein ubiquitination. Probable E3 ubiquitin-protein ligase which mediates ubiquitination and subsequent proteasomal degradation of target proteins. The chain is E3 ubiquitin-protein ligase UPL2 (UPL2) from Arabidopsis thaliana (Mouse-ear cress).